A 123-amino-acid chain; its full sequence is Large ribosomal subunit protein bL19 (123 aa).

It belongs to the bacterial ribosomal protein bL19 family.

Functionally, this protein is located at the 30S-50S ribosomal subunit interface and may play a role in the structure and function of the aminoacyl-tRNA binding site. This Bdellovibrio bacteriovorus (strain ATCC 15356 / DSM 50701 / NCIMB 9529 / HD100) protein is Large ribosomal subunit protein bL19.